An 83-amino-acid chain; its full sequence is Exodeoxyribonuclease 7 small subunit (83 aa).

Belongs to the XseB family. Heterooligomer composed of large and small subunits.

The protein localises to the cytoplasm. The catalysed reaction is Exonucleolytic cleavage in either 5'- to 3'- or 3'- to 5'-direction to yield nucleoside 5'-phosphates.. Bidirectionally degrades single-stranded DNA into large acid-insoluble oligonucleotides, which are then degraded further into small acid-soluble oligonucleotides. In Brucella melitensis biotype 1 (strain ATCC 23456 / CCUG 17765 / NCTC 10094 / 16M), this protein is Exodeoxyribonuclease 7 small subunit.